The sequence spans 362 residues: 3-isopropylmalate dehydrogenase (362 aa).

77–88 (GPKWGTGAVRPE) is a binding site for NAD(+). Positions 95, 105, 134, and 223 each coordinate substrate. Mg(2+)-binding residues include D223, D248, and D252. 287–298 (GSAPDLPPNKVN) contributes to the NAD(+) binding site.

This sequence belongs to the isocitrate and isopropylmalate dehydrogenases family. Homodimer. Mg(2+) serves as cofactor. Requires Mn(2+) as cofactor.

The protein resides in the cytoplasm. It catalyses the reaction (2R,3S)-3-isopropylmalate + NAD(+) = 4-methyl-2-oxopentanoate + CO2 + NADH. The protein operates within amino-acid biosynthesis; L-leucine biosynthesis; L-leucine from 3-methyl-2-oxobutanoate: step 3/4. Its function is as follows. Catalyzes the oxidation of 3-carboxy-2-hydroxy-4-methylpentanoate (3-isopropylmalate) to 3-carboxy-4-methyl-2-oxopentanoate. The product decarboxylates to 4-methyl-2 oxopentanoate. In Blastobotrys adeninivorans (Yeast), this protein is 3-isopropylmalate dehydrogenase (LEU2).